The following is a 270-amino-acid chain: Coiled-coil domain-containing protein 3 (270 aa).

Positions 1 to 21 (MLRQLLLAALCLAGPPAPARA) are cleaved as a signal peptide. Asparagine 100 carries an N-linked (GlcNAc...) asparagine glycan. Residues 188–251 (SVQKALFEEE…NQKLSEKLAA (64 aa)) adopt a coiled-coil conformation.

In terms of assembly, homodimer. Expressed in umbilical vein endothelial cells (HUVEC), and at lower levels in aortic smooth muscle cells (HASMC).

The protein resides in the secreted. Negatively regulates TNF-alpha-induced pro-inflammatory response in endothelial cells (ECs) via inhibition of TNF-alpha-induced NF-kappaB activation in ECs. Positively regulates lipid accumulation in adipose cells. In Homo sapiens (Human), this protein is Coiled-coil domain-containing protein 3 (CCDC3).